Consider the following 316-residue polypeptide: Retron Ec73 reverse transcriptase (316 aa).

Residues 1–243 (MRIYSLIDSQ…GSIVVTGLKV (243 aa)) form the Reverse transcriptase domain. Positions 99, 189, and 190 each coordinate Mg(2+). Residues 247-316 (FHITLHRSMK…WIQNLHNKVE (70 aa)) are necessary and required for recognition and binding of RNA.

It belongs to the bacterial reverse transcriptase family.

It carries out the reaction DNA(n) + a 2'-deoxyribonucleoside 5'-triphosphate = DNA(n+1) + diphosphate. Reverse transcriptase (RT) component of antiviral defense system retron Ec73, composed of a non-coding RNA (ncRNA) followed by a ribosyltransferase/DNA-binding protein then a reverse transcriptase (RT). Expression of this retron confers protection against bacteriophages SECphi4, SECphi6, SECphi27 and P1. At multiplicity of infection (MOI) of 0.02 cultures grow normally when infected with SECphi4 without collapsing, at MOI 2 cultures enter growth stasis. Responsible for synthesis of msDNA-Ec73 (a branched molecule with RNA linked by a 2',5'-phosphodiester bond to ssDNA). The retron transcript serves as primer (from a conserved internal G residue) and template for the reaction, and codes for the RT. Recognizes only its cognate RNA as a primer template. This Escherichia coli protein is Retron Ec73 reverse transcriptase.